We begin with the raw amino-acid sequence, 648 residues long: Calpain-5 (648 aa).

Positions 28–353 (PFVDTLFPPT…FTDISLCQLF (326 aa)) constitute a Calpain catalytic domain. Active-site residues include Cys83, His252, and Asn290. The segment at 354-509 (NTSVFSFSRS…VYSDEHIHFS (156 aa)) is domain III. The region spanning 502–625 (SDEHIHFSPL…ENRDTTLQLT (124 aa)) is the C2 domain.

It belongs to the peptidase C2 family. Requires Ca(2+) as cofactor. In terms of tissue distribution, expressed in neuronal, but not in GABA-ergic neurons, intestinal, hypodermal and excretory tissues.

Required for the correct female sexual development of the soma and germline in hermaphrodite animals, while being fully dispensable in males. Has calcium-dependent proteolytic activity and is involved in the cleavage of tra-2, for which it acts as a potentiator. Capable of calcium-dependent autolysis. Part of the necrosis cell death pathway. Required for necrosis of intestinal cells induced by B.thuringiensis endotoxin Cry6Aa. This is Calpain-5 from Caenorhabditis elegans.